The chain runs to 118 residues: Holo-[acyl-carrier-protein] synthase (118 aa).

Mg(2+)-binding residues include Asp-8 and Glu-58.

The protein belongs to the P-Pant transferase superfamily. AcpS family. Mg(2+) is required as a cofactor.

It is found in the cytoplasm. The catalysed reaction is apo-[ACP] + CoA = holo-[ACP] + adenosine 3',5'-bisphosphate + H(+). Functionally, transfers the 4'-phosphopantetheine moiety from coenzyme A to a Ser of acyl-carrier-protein. This chain is Holo-[acyl-carrier-protein] synthase, found in Streptococcus equi subsp. zooepidemicus (strain MGCS10565).